Here is a 452-residue protein sequence, read N- to C-terminus: tRNA modification GTPase MnmE (452 aa).

Positions 25, 81, and 120 each coordinate (6S)-5-formyl-5,6,7,8-tetrahydrofolate. The TrmE-type G domain maps to 216–375 (GITVVIAGEP…LKNHLKNTAG (160 aa)). N226 provides a ligand contact to K(+). GTP contacts are provided by residues 226–231 (NVGKSS), 245–251 (TDIAGTT), and 270–273 (DTAG). Position 230 (S230) interacts with Mg(2+). K(+) contacts are provided by T245, I247, and T250. Position 251 (T251) interacts with Mg(2+). K452 contributes to the (6S)-5-formyl-5,6,7,8-tetrahydrofolate binding site.

The protein belongs to the TRAFAC class TrmE-Era-EngA-EngB-Septin-like GTPase superfamily. TrmE GTPase family. Homodimer. Heterotetramer of two MnmE and two MnmG subunits. It depends on K(+) as a cofactor.

It localises to the cytoplasm. Exhibits a very high intrinsic GTPase hydrolysis rate. Involved in the addition of a carboxymethylaminomethyl (cmnm) group at the wobble position (U34) of certain tRNAs, forming tRNA-cmnm(5)s(2)U34. The polypeptide is tRNA modification GTPase MnmE (Coxiella burnetii (strain Dugway 5J108-111)).